The following is a 358-amino-acid chain: Metacaspase-3 (358 aa).

The important for catalytic activity stretch occupies residues 1 to 84; the sequence is MGFDFGCLLK…APTHVSGTFR (84 aa). Catalysis depends on residues His-168 and Cys-223.

The protein belongs to the peptidase C14B family. In terms of processing, in epimastigotes, the unprocessed enzyme appears to be the main form. Auto-processing is dispensable for catalytic activity towards small oligopeptide substrates.

The protein resides in the cytoplasm. Its subcellular location is the nucleus. Activated by Ca(2+). In terms of biological role, cysteine protease that cleaves specifically after arginine or lysine residues. In epimastigotes, may play a role in cell cycle G1/S transition. The sequence is that of Metacaspase-3 from Trypanosoma cruzi (strain CL Brener).